An 853-amino-acid chain; its full sequence is ATP-dependent zinc metalloprotease FtsH (853 aa).

At Met1–Lys5 the chain is on the cytoplasmic side. The helical transmembrane segment at Tyr6–Phe26 threads the bilayer. The Extracellular portion of the chain corresponds to Ser27–Ser113. A helical transmembrane segment spans residues Phe114–Phe134. The Cytoplasmic portion of the chain corresponds to Phe135–Gly853. Gly205–Thr212 contacts ATP. Residue His427 participates in Zn(2+) binding. Glu428 is an active-site residue. Positions 431 and 503 each coordinate Zn(2+). 2 stretches are compositionally biased toward basic and acidic residues: residues Glu619 to Val632 and Ala639 to Lys648. The disordered stretch occupies residues Glu619 to Gly853. The span at Pro677–Gly695 shows a compositional bias: low complexity. 2 stretches are compositionally biased toward polar residues: residues Thr728–Ser739 and Met770–Pro788. The span at Leu796–Val813 shows a compositional bias: basic and acidic residues.

The protein in the central section; belongs to the AAA ATPase family. This sequence in the C-terminal section; belongs to the peptidase M41 family. As to quaternary structure, homohexamer. It depends on Zn(2+) as a cofactor.

It localises to the cell membrane. Acts as a processive, ATP-dependent zinc metallopeptidase for both cytoplasmic and membrane proteins. Plays a role in the quality control of integral membrane proteins. The polypeptide is ATP-dependent zinc metalloprotease FtsH (Corynebacterium glutamicum (strain ATCC 13032 / DSM 20300 / JCM 1318 / BCRC 11384 / CCUG 27702 / LMG 3730 / NBRC 12168 / NCIMB 10025 / NRRL B-2784 / 534)).